Consider the following 515-residue polypeptide: Methionine--tRNA ligase (515 aa).

The 'HIGH' region signature appears at 13 to 23 (AYPNGKPHIGH). The short motif at 300 to 304 (KMSKS) is the 'KMSKS' region element. Residue Lys-303 coordinates ATP.

This sequence belongs to the class-I aminoacyl-tRNA synthetase family. MetG type 2B subfamily. In terms of assembly, monomer.

Its subcellular location is the cytoplasm. The enzyme catalyses tRNA(Met) + L-methionine + ATP = L-methionyl-tRNA(Met) + AMP + diphosphate. Its function is as follows. Is required not only for elongation of protein synthesis but also for the initiation of all mRNA translation through initiator tRNA(fMet) aminoacylation. The protein is Methionine--tRNA ligase of Brucella suis biovar 1 (strain 1330).